The sequence spans 511 residues: Chromosomal replication initiator protein DnaA (511 aa).

Residues 1–87 (MSVELWQQCV…IGSKRSSAPR (87 aa)) form a domain I, interacts with DnaA modulators region. The domain II stretch occupies residues 87 to 174 (RAAPNAPLAA…QVEGALKHTS (88 aa)). The disordered stretch occupies residues 133–160 (VATHDEPSRDSFDPMAGASSQQAPARAE). A compositionally biased stretch (basic and acidic residues) spans 134 to 144 (ATHDEPSRDSF). Residues 175–391 (YLNRTFTFEN…GALKRVIAHS (217 aa)) form a domain III, AAA+ region region. Residues Gly219, Gly221, Lys222, and Thr223 each contribute to the ATP site. The tract at residues 392 to 511 (HFMGRDITIE…YKNLLRTLTT (120 aa)) is domain IV, binds dsDNA.

This sequence belongs to the DnaA family. Oligomerizes as a right-handed, spiral filament on DNA at oriC.

The protein resides in the cytoplasm. Functionally, plays an essential role in the initiation and regulation of chromosomal replication. ATP-DnaA binds to the origin of replication (oriC) to initiate formation of the DNA replication initiation complex once per cell cycle. Binds the DnaA box (a 9 base pair repeat at the origin) and separates the double-stranded (ds)DNA. Forms a right-handed helical filament on oriC DNA; dsDNA binds to the exterior of the filament while single-stranded (ss)DNA is stabiized in the filament's interior. The ATP-DnaA-oriC complex binds and stabilizes one strand of the AT-rich DNA unwinding element (DUE), permitting loading of DNA polymerase. After initiation quickly degrades to an ADP-DnaA complex that is not apt for DNA replication. Binds acidic phospholipids. The sequence is that of Chromosomal replication initiator protein DnaA from Pseudomonas syringae pv. tomato (strain ATCC BAA-871 / DC3000).